Here is a 590-residue protein sequence, read N- to C-terminus: Rho GTPase-activating protein 36 (590 aa).

The region spanning 214–414 (MSLNPIAQQI…AMIDNWDILF (201 aa)) is the Rho-GAP domain. A disordered region spans residues 526–590 (IPNNEDTDSD…KGKFATRFFP (65 aa)).

As to quaternary structure, may interacts (via the Rho-GAP domain) with the active form of RAC1.

GTPase activator for the Rho-type GTPases by converting them to an inactive GDP-bound state. This chain is Rho GTPase-activating protein 36 (Arhgap36), found in Mus musculus (Mouse).